A 75-amino-acid polypeptide reads, in one-letter code: Putative UPF0377 protein YAL067W-A (75 aa).

The protein belongs to the UPF0377 family.

The polypeptide is Putative UPF0377 protein YAL067W-A (Saccharomyces cerevisiae (strain ATCC 204508 / S288c) (Baker's yeast)).